The primary structure comprises 895 residues: Putative endoplasmic reticulum metallopeptidase 1-A (895 aa).

The disordered stretch occupies residues 1–30 (MLRRRGGPNELRDELNNSKNQPEDDQRTKR). Residues 1-34 (MLRRRGGPNELRDELNNSKNQPEDDQRTKRGRES) lie on the Cytoplasmic side of the membrane. Residues 10–30 (ELRDELNNSKNQPEDDQRTKR) show a composition bias toward basic and acidic residues. Residues 35 to 55 (IGFRHWIYFVLTVAIVYAGVV) form a helical membrane-spanning segment. Residues 56 to 383 (ALHRKMPAVR…VVGLFTVYYS (328 aa)) lie on the Lumenal side of the membrane. Zn(2+) contacts are provided by His-174 and Asp-186. Glu-220 acts as the Proton acceptor in catalysis. Positions 221, 247, and 323 each coordinate Zn(2+). A helical transmembrane segment spans residues 384-404 (VNVGKLLNYIACFATYFLVVL). Residues 405-423 (RIRNRLYSVGDLAIAFKHH) lie on the Cytoplasmic side of the membrane. A helical transmembrane segment spans residues 424-444 (VVAFLAMVITMLLIIAFVVQM). Topologically, residues 445–452 (DLVMCWYK) are lumenal. Residues 453-473 (MPEIVGALYVLPMLIAGAIVH) form a helical membrane-spanning segment. Residues 474–492 (SHYADNNRIRNVEMVQYDT) lie on the Cytoplasmic side of the membrane. The helical transmembrane segment at 493 to 513 (ILLSFASILFLMTFYNLSSAF) threads the bilayer. At 514 to 517 (YVLN) the chain is on the lumenal side. A helical membrane pass occupies residues 518 to 538 (NLILPVFKDIIIWALGLFGVI). Over 539–544 (RRVTPR) the chain is Cytoplasmic. Residues 545 to 565 (VLFFTQLFCFLPTFVFAAYAI) form a helical membrane-spanning segment. Over 566 to 586 (SQCVDFFVPVMGRLGNAINPE) the chain is Lumenal. Residues 587–607 (FIMGPLGLVIASGFILFVNNL) traverse the membrane as a helical segment. Residues 608–613 (FYISRR) lie on the Cytoplasmic side of the membrane. Residues 614 to 634 (MNYIIRLLFAIFALFILVLIT) traverse the membrane as a helical segment. The Lumenal portion of the chain corresponds to 635-895 (TKVGNPYEYS…GRSEIVVKIF (261 aa)). 3 N-linked (GlcNAc...) asparagine glycosylation sites follow: Asn-659, Asn-702, and Asn-758.

Belongs to the peptidase M28 family. The cofactor is Zn(2+).

The protein localises to the endoplasmic reticulum membrane. The protein is Putative endoplasmic reticulum metallopeptidase 1-A of Caenorhabditis elegans.